The following is a 233-amino-acid chain: Probable transglycosylase IsaA (233 aa).

A signal peptide spans 1–29 (MKKTIMASSLAVALGVTGYAAGTGHQAHA).

The protein belongs to the transglycosylase family. IsaA subfamily.

It localises to the secreted. In terms of biological role, is able to cleave peptidoglycan. This is Probable transglycosylase IsaA (isaA) from Staphylococcus aureus (strain USA300).